Consider the following 67-residue polypeptide: ATP synthase F(0) complex subunit 8 (67 aa).

A helical transmembrane segment spans residues 8–24 (TWFINIVSMILTLFIVF). Lys-54 is modified (N6-acetyllysine; alternate). An N6-succinyllysine; alternate modification is found at Lys-54. An N6-acetyllysine modification is found at Lys-57.

The protein belongs to the ATPase protein 8 family. In terms of assembly, component of the ATP synthase complex composed at least of ATP5F1A/subunit alpha, ATP5F1B/subunit beta, ATP5MC1/subunit c (homooctomer), MT-ATP6/subunit a, MT-ATP8/subunit 8, ATP5ME/subunit e, ATP5MF/subunit f, ATP5MG/subunit g, ATP5MK/subunit k, ATP5MJ/subunit j, ATP5F1C/subunit gamma, ATP5F1D/subunit delta, ATP5F1E/subunit epsilon, ATP5PF/subunit F6, ATP5PB/subunit b, ATP5PD/subunit d, ATP5PO/subunit OSCP. ATP synthase complex consists of a soluble F(1) head domain (subunits alpha(3) and beta(3)) - the catalytic core - and a membrane F(0) domain - the membrane proton channel (subunits c, a, 8, e, f, g, k and j). These two domains are linked by a central stalk (subunits gamma, delta, and epsilon) rotating inside the F1 region and a stationary peripheral stalk (subunits F6, b, d, and OSCP). Interacts with PRICKLE3.

It is found in the mitochondrion membrane. Functionally, subunit 8, of the mitochondrial membrane ATP synthase complex (F(1)F(0) ATP synthase or Complex V) that produces ATP from ADP in the presence of a proton gradient across the membrane which is generated by electron transport complexes of the respiratory chain. ATP synthase complex consist of a soluble F(1) head domain - the catalytic core - and a membrane F(1) domain - the membrane proton channel. These two domains are linked by a central stalk rotating inside the F(1) region and a stationary peripheral stalk. During catalysis, ATP synthesis in the catalytic domain of F(1) is coupled via a rotary mechanism of the central stalk subunits to proton translocation. In vivo, can only synthesize ATP although its ATP hydrolase activity can be activated artificially in vitro. Part of the complex F(0) domain. The polypeptide is ATP synthase F(0) complex subunit 8 (Equus caballus (Horse)).